Reading from the N-terminus, the 133-residue chain is Fatty acid-binding protein, heart (133 aa).

N-acetylvaline is present on valine 2. Threonine 8 carries the phosphothreonine modification. Residue tyrosine 20 is modified to Phosphotyrosine; by Tyr-kinases. Residue serine 23 is modified to Phosphoserine. A Phosphothreonine modification is found at threonine 30. A Phosphoserine modification is found at serine 83. 127–129 (RTY) contributes to the (9Z)-octadecenoate binding site. A hexadecanoate-binding site is contributed by 127 to 129 (RTY). 127-129 (RTY) is a binding site for octadecanoate.

The protein belongs to the calycin superfamily. Fatty-acid binding protein (FABP) family.

Its subcellular location is the cytoplasm. Its function is as follows. FABPs are thought to play a role in the intracellular transport of long-chain fatty acids and their acyl-CoA esters. The polypeptide is Fatty acid-binding protein, heart (FABP3) (Sus scrofa (Pig)).